A 559-amino-acid polypeptide reads, in one-letter code: MTSEKPRKYSQKIVDGSAQAPSRSMLRAVGFNDDDFKKSQVGIASTWSMVTPCNMHINTLAEEVGKGVDSAGAKSVIYNTITVSDGISMGTEGMKYSLVSREVICDSIEAVSAGMGHDGIIAIGGCDKNMPGCLMGLARLNRPSIFVYGGTILPGENHTDIVSVFEAVGSYAAGDIPITQLEHIEKTAIPGAGSCGGMYTANTLASAIEALGMSMPNSSAQNAISQNKKQDCIDAGKAIVYLLEHDIKPSDIMTKKAFENAITLIITLGGSTNAVLHLIAMADAVGVEVTLDDFVRIGDKTPVIADLRPSGQYLMSELIEIGGIQPLMKRLLDAGMLHGDCMTVTGKTMAENLADVADYPAGQNIILPFDKPIKKDSHLVILAGNLAPEGAVSKITGKEGLRFTGNAKVYDSEEQGFAAIIDGQVVAGDVVVIRYEGPKGGPGMREMLSPTSAIMGKGLGNDVALITDGRFSGGSRGFVVGHVTPEAYEGGAIALVENGDSITIDAQSREMTLNITDEEMASRKQRWQQPAPKYTRGLLAKYARTVSSASTGAVTDKPS.

Cys-53 lines the [2Fe-2S] cluster pocket. Residue Asp-85 participates in Mg(2+) binding. [2Fe-2S] cluster is bound at residue Cys-126. 2 residues coordinate Mg(2+): Asp-127 and Lys-128. Position 128 is an N6-carboxylysine (Lys-128). Residue Cys-195 coordinates [2Fe-2S] cluster. Residue Glu-446 coordinates Mg(2+). Ser-472 functions as the Proton acceptor in the catalytic mechanism.

This sequence belongs to the IlvD/Edd family. In terms of assembly, homodimer. Requires [2Fe-2S] cluster as cofactor. The cofactor is Mg(2+).

The enzyme catalyses (2R)-2,3-dihydroxy-3-methylbutanoate = 3-methyl-2-oxobutanoate + H2O. The catalysed reaction is (2R,3R)-2,3-dihydroxy-3-methylpentanoate = (S)-3-methyl-2-oxopentanoate + H2O. The protein operates within amino-acid biosynthesis; L-isoleucine biosynthesis; L-isoleucine from 2-oxobutanoate: step 3/4. It functions in the pathway amino-acid biosynthesis; L-valine biosynthesis; L-valine from pyruvate: step 3/4. Functionally, functions in the biosynthesis of branched-chain amino acids. Catalyzes the dehydration of (2R,3R)-2,3-dihydroxy-3-methylpentanoate (2,3-dihydroxy-3-methylvalerate) into 2-oxo-3-methylpentanoate (2-oxo-3-methylvalerate) and of (2R)-2,3-dihydroxy-3-methylbutanoate (2,3-dihydroxyisovalerate) into 2-oxo-3-methylbutanoate (2-oxoisovalerate), the penultimate precursor to L-isoleucine and L-valine, respectively. The protein is Dihydroxy-acid dehydratase 2 of Pseudoalteromonas translucida (strain TAC 125).